Consider the following 294-residue polypeptide: Undecaprenyl-diphosphatase (294 aa).

6 consecutive transmembrane segments (helical) span residues 39–59 (PGAA…ILYF), 93–113 (ATLG…GFTL), 123–143 (NLWI…VVDA), 198–218 (SFLM…VKAV), 232–252 (PTLV…IGFL), and 268–288 (IGLA…AIDP).

This sequence belongs to the UppP family.

Its subcellular location is the cell membrane. It carries out the reaction di-trans,octa-cis-undecaprenyl diphosphate + H2O = di-trans,octa-cis-undecaprenyl phosphate + phosphate + H(+). Functionally, catalyzes the dephosphorylation of undecaprenyl diphosphate (UPP). Confers resistance to bacitracin. The protein is Undecaprenyl-diphosphatase of Bifidobacterium longum subsp. infantis (strain ATCC 15697 / DSM 20088 / JCM 1222 / NCTC 11817 / S12).